Here is a 240-residue protein sequence, read N- to C-terminus: tRNA1(Val) (adenine(37)-N6)-methyltransferase (240 aa).

The protein belongs to the methyltransferase superfamily. tRNA (adenine-N(6)-)-methyltransferase family.

It localises to the cytoplasm. It catalyses the reaction adenosine(37) in tRNA1(Val) + S-adenosyl-L-methionine = N(6)-methyladenosine(37) in tRNA1(Val) + S-adenosyl-L-homocysteine + H(+). Functionally, specifically methylates the adenine in position 37 of tRNA(1)(Val) (anticodon cmo5UAC). In Vibrio cholerae serotype O1 (strain ATCC 39315 / El Tor Inaba N16961), this protein is tRNA1(Val) (adenine(37)-N6)-methyltransferase.